A 270-amino-acid polypeptide reads, in one-letter code: tRNA 2-(methylsulfanyl)-N(6)-isopentenyladenosine(37) hydroxylase (270 aa).

Positions 59, 137, 140, 190, 219, and 222 each coordinate Fe cation.

The protein belongs to the MiaE family. Monomer. It depends on Fe cation as a cofactor.

The catalysed reaction is 2-methylsulfanyl-N(6)-dimethylallyladenosine(37) in tRNA + AH2 + O2 = N(6)-[(2E)-4-hydroxy-3-methylbut-2-en-1-yl]-2-(methylsulfanyl)adenosine(37) in tRNA + A + H2O. It functions in the pathway tRNA modification; 2-methylthio-N-6-(cis-hydroxy)isopentenyl adenosine-tRNA biosynthesis. Involved in specific tRNA modification. Catalyzes the oxygen-dependent hydroxylation of 2-methylthio-N-6-isopentenyl adenosine (ms2i6A) to produce 2-methylthio-N-6-(cis-hydroxy)isopentenyl adenosine (ms2io6A) at position 37 in tRNAs. Can also use N6-(dimethylallyl)adenosine (i6A) as substrate, with lower efficiency. The presence of the hydroxyl group on the tRNA may regulate the ability of S.typhimurium to grow on the citric acid cycle (CAC) intermediates succinate, fumarate and malate. The protein is tRNA 2-(methylsulfanyl)-N(6)-isopentenyladenosine(37) hydroxylase of Salmonella typhimurium (strain LT2 / SGSC1412 / ATCC 700720).